Here is a 497-residue protein sequence, read N- to C-terminus: Envelope glycoprotein E (497 aa).

Topologically, residues 1–398 (MCVFQILIIV…GTIIYDILLT (398 aa)) are virion surface. N-linked (GlcNAc...) asparagine; by host glycans are attached at residues Asn-60, Asn-133, Asn-148, Asn-203, Asn-277, Asn-366, and Asn-388. Residues 399 to 419 (SLSIGAIIIVIVGGVCIAILI) form a helical membrane-spanning segment. Residues 420–497 (RRRRRRRTRG…KIRKRLDLYH (78 aa)) lie on the Intravirion side of the membrane.

The protein belongs to the alphaherpesvirinae glycoprotein E family. Interacts with gI. Phosphorylated within the acidic cluster. Phosphorylation determines whether endocytosed viral gE traffics to the trans-Golgi network or recycles to the cell membrane.

It localises to the virion membrane. It is found in the host cell membrane. The protein resides in the host cell junction. Its subcellular location is the host Golgi apparatus membrane. The protein localises to the host endosome membrane. Its function is as follows. In epithelial cells, the heterodimer gE/gI is required for the cell-to-cell spread of the virus, by sorting nascent virions to cell junctions. Once the virus reaches the cell junctions, virus particles can spread to adjacent cells extremely rapidly through interactions with cellular receptors that accumulate at these junctions. Implicated in basolateral spread in polarized cells. In neuronal cells, gE/gI is essential for the anterograde spread of the infection throughout the host nervous system. Together with US9, the heterodimer gE/gI is involved in the sorting and transport of viral structural components toward axon tips. The chain is Envelope glycoprotein E (MDV096) from Gallus gallus (Chicken).